The primary structure comprises 893 residues: MESTMSSASTNASPPSASEKHTPMMQQYLRIKAEHPETLLFYRMGDFYEVFFEDAEKASRLLGITLTQRGSSNGNPIKMAGVPFHAVDQYLSKLVKLGESIALCEQIGDPATSKGPVERKVLRVITPGTLSDSDLLPEKSEQPLLALYSTTQRKTITIGLAWLSMASGALKLMEFTTDARNAATRLKHELERIAPAEVLLPGSIDGPDSDYAFAKNTTVPDWHFDIAHGSKALHEQLKVSTLTGFGAEHLNAAIGAAGALLRYAQATQGKGLQHVRALTVETENEFIGLDAATRRNLELTETIRGQDNNSATLFSLLDHCRTAMGSRLLRHWLHHARRDQAVARARHAAINALMRTDACTGLASTLASVPDVERIATRIALQSARPRDLAGMRGGLQQLPSLRAYVSMCNQDADAPLLKTIHDALATPSECLDLVERAIALEPAAMVRDGGVIARGFDAELDELRGLSENAGQFLVDLETRERTRTGINNLRVEYNKVHGFYIEVTHGQTDKVPDDYRRRQTLKNAERYITPELKAFEDKALSAQERALAREKYLYDQVLQQMAQHIGTLQNIAHALAQLDTLVALAEHALRHNWCAPQLIAEPTIAIEQGRHPVVENHIERFIANDCLLNNESRLLLITGPNMGGKSTYMRQVALITLLAYVGSFVPATSATIGPIDRIFTRIGAADDLAGGRSTFMVEMTESAAILNGATENSLVLMDEVGRGTSTFDGLALAWAIARHLIDSTRSFTLFATHYFELTQLPEVHPSAANVHLSAVEHKDSIVFLHAVQAGPASQSYGLQVAQLAGVPQAVIRAARKHLATLEANSMQATPQFDLFADPDHLIPTSDVETAMAQPSALDEALADINPDALSPRDALDALYRLKELSNQHREK.

Low complexity predominate over residues methionine 1–alanine 17. The interval methionine 1–threonine 22 is disordered. An ATP-binding site is contributed by glycine 641–serine 648.

Belongs to the DNA mismatch repair MutS family.

In terms of biological role, this protein is involved in the repair of mismatches in DNA. It is possible that it carries out the mismatch recognition step. This protein has a weak ATPase activity. The protein is DNA mismatch repair protein MutS of Herminiimonas arsenicoxydans.